The following is a 421-amino-acid chain: Replication-associated recombination protein A (421 aa).

An ATP-binding site is contributed by 45-52 (GPPGIGKT).

The protein belongs to the AAA ATPase family. RarA/MGS1/WRNIP1 subfamily. In terms of assembly, homotetramer. Interacts with single-stranded binding protein SsbA. May interact with PriA.

The protein localises to the cytoplasm. It is found in the nucleoid. SsDNA-dependent ATP hydrolysis is stimulated by single-stranded binding protein SsbA but not by SsbB; in the presence of SsbB, ssDNA secondary structure is removed and RarA's ATPase activity is decreased. The C-terminal 9 residues of SsbA are sufficient to stimulate ATPase activity. Plays a role in recombination-dependent DNA replication. Positively affects the formation of RecA threads during response to DNA damage, directly or indirectly counteracting the negative RecA modulators RecX and RecU. Stabilizes a RecA-ssDNA complex. In vitro, in the presence of SsbA, inhibits PriA-dependent DNA replication restart of both leading and lagging strands; elongation is insensitive to RarA. Plays a role in response to DNA damage, localizes to the replication fork but also to DNA elsewhere in the cell. Probably required for repair of single-stranded nicks generated by H(2)O(2). Epistatic to RecA, partially represses deletions of the error-prone translesion DNA polymerases (dinB1 and dinB2), genetically interacts with replicative helicase loaders dnaB and dnaD. Epistatic to recF and recO mutations upon DNA damage. A DNA-dependent ATPase stimulated by hairpin structures in circular single-stranded (ss)DNA or ssDNA-dsDNA junctions, by blunt end and 5'-tailed dsDNA and by single-stranded binding protein SsbA protein bound to ssDNA. Preferentially binds ssDNA and replication-fork structures; SsbA stimulates binding to ssDNA. Addition of ATP to the protein has no visible effect in vitro. The polypeptide is Replication-associated recombination protein A (Bacillus subtilis (strain 168)).